We begin with the raw amino-acid sequence, 441 residues long: Ribulose bisphosphate carboxylase large chain (441 aa).

Lysine 4 carries the N6,N6,N6-trimethyllysine modification. Positions 113 and 163 each coordinate substrate. The active-site Proton acceptor is the lysine 165. Lysine 167 contributes to the substrate binding site. Residues lysine 191, aspartate 193, and glutamate 194 each contribute to the Mg(2+) site. The residue at position 191 (lysine 191) is an N6-carboxylysine. Catalysis depends on histidine 284, which acts as the Proton acceptor. Residues arginine 285, histidine 317, and serine 369 each coordinate substrate.

The protein belongs to the RuBisCO large chain family. Type I subfamily. In terms of assembly, heterohexadecamer of 8 large chains and 8 small chains; disulfide-linked. The disulfide link is formed within the large subunit homodimers. Mg(2+) is required as a cofactor. Post-translationally, the disulfide bond which can form in the large chain dimeric partners within the hexadecamer appears to be associated with oxidative stress and protein turnover.

The protein localises to the plastid. Its subcellular location is the chloroplast. The enzyme catalyses 2 (2R)-3-phosphoglycerate + 2 H(+) = D-ribulose 1,5-bisphosphate + CO2 + H2O. It carries out the reaction D-ribulose 1,5-bisphosphate + O2 = 2-phosphoglycolate + (2R)-3-phosphoglycerate + 2 H(+). RuBisCO catalyzes two reactions: the carboxylation of D-ribulose 1,5-bisphosphate, the primary event in carbon dioxide fixation, as well as the oxidative fragmentation of the pentose substrate in the photorespiration process. Both reactions occur simultaneously and in competition at the same active site. This is Ribulose bisphosphate carboxylase large chain from Darlingtonia californica (California pitcher plant).